Consider the following 923-residue polypeptide: Hexokinase-3 (923 aa).

Residues 1–18 are compositionally biased toward polar residues; that stretch reads MDSIGSSGLRQGEETLSC. A disordered region spans residues 1 to 30; that stretch reads MDSIGSSGLRQGEETLSCSEEGLPGPSDSS. 2 Hexokinase domains span residues 27-471 and 477-912; these read SDSS…MVTA and AAHR…LVTA. The interval 84–220 is hexokinase small subdomain 1; it reads HGTEQGDFVV…AYNIDVVAVV (137 aa). 95-102 is an ATP binding site; that stretch reads ELGATGAS. Position 95 to 104 (95 to 104) interacts with D-glucose 6-phosphate; that stretch reads ELGATGASLR. D-glucose contacts are provided by residues serine 168, 185–186, and 221–222; these read TK and ND. The interval 221-460 is hexokinase large subdomain 1; the sequence is NDTVGTMMGC…CDVSLIPSVD (240 aa). Residues aspartate 222 and threonine 245 each coordinate D-glucose 6-phosphate. D-glucose is bound by residues asparagine 248, glutamate 273, and 304-307; that span reads QRFE. 426 to 428 is a binding site for D-glucose 6-phosphate; that stretch reads GGR. ATP is bound by residues 438–439 and 542–547; these read SV and DLGGTN. Residues 531–661 form a hexokinase small subdomain 2 region; it reads DGSERGDFLA…AVELNVVAIV (131 aa). Residue 542 to 546 participates in D-glucose 6-phosphate binding; it reads DLGGT. Residues 609 to 610, 626 to 627, and 662 to 663 each bind D-glucose; these read SF, TK, and ND. Residues 662–901 form a hexokinase large subdomain 2 region; it reads NDTVGTMMSC…CVVTFLQSED (240 aa). Residues aspartate 663 and threonine 686 each contribute to the D-glucose 6-phosphate site. Threonine 686 contacts ATP. D-glucose is bound by residues 688-689, glutamate 714, and glutamate 748; that span reads TN. Residues 753-754, 790-794, and 869-873 contribute to the ATP site; these read GM, TKFLS, and TLYKL. D-glucose 6-phosphate contacts are provided by residues 867–869 and serine 903; that span reads DGT.

This sequence belongs to the hexokinase family.

The catalysed reaction is a D-hexose + ATP = a D-hexose 6-phosphate + ADP + H(+). It carries out the reaction D-fructose + ATP = D-fructose 6-phosphate + ADP + H(+). The enzyme catalyses D-glucose + ATP = D-glucose 6-phosphate + ADP + H(+). Its pathway is carbohydrate metabolism; hexose metabolism. It functions in the pathway carbohydrate degradation; glycolysis; D-glyceraldehyde 3-phosphate and glycerone phosphate from D-glucose: step 1/4. Hexokinase is an allosteric enzyme inhibited by its product D-glucose 6-phosphate. Functionally, catalyzes the phosphorylation of hexose, such as D-glucose and D-fructose, to hexose 6-phosphate (D-glucose 6-phosphate and D-fructose 6-phosphate, respectively). Mediates the initial step of glycolysis by catalyzing phosphorylation of D-glucose to D-glucose 6-phosphate. This is Hexokinase-3 from Homo sapiens (Human).